The sequence spans 74 residues: Histone H1.C8/H1.M1 (74 aa).

Residues 1–74 (MSDAAVPPKK…KAVKKAPKKK (74 aa)) are disordered. Basic residues predominate over residues 11–74 (ASPKKAAAKK…KAVKKAPKKK (64 aa)).

The protein localises to the nucleus. It is found in the chromosome. This Trypanosoma cruzi protein is Histone H1.C8/H1.M1.